The following is a 572-amino-acid chain: Urease subunit alpha (572 aa).

The region spanning Gly134 to Phe572 is the Urease domain. His139, His141, and Lys222 together coordinate Ni(2+). Residue Lys222 is modified to N6-carboxylysine. His224 is a substrate binding site. 2 residues coordinate Ni(2+): His251 and His277. His325 (proton donor) is an active-site residue. Position 365 (Asp365) interacts with Ni(2+).

The protein belongs to the metallo-dependent hydrolases superfamily. Urease alpha subunit family. Heterotrimer of UreA (gamma), UreB (beta) and UreC (alpha) subunits. Three heterotrimers associate to form the active enzyme. Ni cation is required as a cofactor. Carboxylation allows a single lysine to coordinate two nickel ions.

The protein resides in the cytoplasm. It catalyses the reaction urea + 2 H2O + H(+) = hydrogencarbonate + 2 NH4(+). It participates in nitrogen metabolism; urea degradation; CO(2) and NH(3) from urea (urease route): step 1/1. This is Urease subunit alpha from Polaromonas sp. (strain JS666 / ATCC BAA-500).